A 90-amino-acid chain; its full sequence is Barrier-to-autointegration factor-like protein (90 aa).

The protein belongs to the BAF family. As to quaternary structure, homodimer. Heterodimerizes with BANF1.

The protein localises to the nucleus. The protein resides in the cytoplasm. Its function is as follows. May play a role in BANF1 regulation and influence tissue-specific roles of BANF1. This Bos taurus (Bovine) protein is Barrier-to-autointegration factor-like protein (BANF2).